We begin with the raw amino-acid sequence, 165 residues long: MSHPALTQLRALRYFDAIPALEPHLLDWLLLEDSVTKRFEQQGKRVSVTLIREAFVGQSEVEEASGLLPSESRYWLREILLCADGEPWLAGRTVVPESTLCGPEQVLQHLGKTPLGRYLFTSSTLTRDFIEIGRDATLWGRRSRLRLSGKPLLLTELFLPASPLY.

Residues R77, L115, and E156 each coordinate substrate.

Belongs to the UbiC family. Monomer.

It localises to the cytoplasm. The enzyme catalyses chorismate = 4-hydroxybenzoate + pyruvate. The protein operates within cofactor biosynthesis; ubiquinone biosynthesis. Its function is as follows. Removes the pyruvyl group from chorismate, with concomitant aromatization of the ring, to provide 4-hydroxybenzoate (4HB) for the ubiquinone pathway. This chain is Chorismate pyruvate-lyase, found in Salmonella typhi.